The primary structure comprises 522 residues: Golgin subfamily A member 6-like protein 10 (522 aa).

A compositionally biased stretch (pro residues) spans Met-1–Pro-11. The segment at Met-1–Gly-77 is disordered. The segment covering Asn-51–Gly-62 has biased composition (polar residues). Residues Ser-157–Gly-328 are a coiled coil. Positions Lys-439–Gly-452 are enriched in basic and acidic residues. The interval Lys-439–Glu-503 is disordered. Low complexity-rich tracts occupy residues Ala-456 to Ala-471 and Gly-489 to Glu-503.

Belongs to the GOLGA6 family.

The protein is Golgin subfamily A member 6-like protein 10 of Homo sapiens (Human).